We begin with the raw amino-acid sequence, 1183 residues long: DNA-directed RNA polymerase subunit beta (1183 aa).

The protein belongs to the RNA polymerase beta chain family. As to quaternary structure, the RNAP catalytic core consists of 2 alpha, 1 beta, 1 beta' and 1 omega subunit. When a sigma factor is associated with the core the holoenzyme is formed, which can initiate transcription.

It catalyses the reaction RNA(n) + a ribonucleoside 5'-triphosphate = RNA(n+1) + diphosphate. In terms of biological role, DNA-dependent RNA polymerase catalyzes the transcription of DNA into RNA using the four ribonucleoside triphosphates as substrates. This chain is DNA-directed RNA polymerase subunit beta, found in Staphylococcus aureus (strain COL).